The chain runs to 172 residues: Lipopolysaccharide export system protein LptA (172 aa).

The first 23 residues, 1 to 23 (MKLVSNKILFLATMVLASSSAFA), serve as a signal peptide directing secretion.

Belongs to the LptA family. In terms of assembly, component of the lipopolysaccharide transport and assembly complex.

The protein localises to the periplasm. In terms of biological role, involved in the assembly of lipopolysaccharide (LPS). Required for the translocation of LPS from the inner membrane to the outer membrane. May form a bridge between the inner membrane and the outer membrane, via interactions with LptC and LptD, thereby facilitating LPS transfer across the periplasm. The sequence is that of Lipopolysaccharide export system protein LptA from Haemophilus influenzae (strain ATCC 51907 / DSM 11121 / KW20 / Rd).